The sequence spans 128 residues: Iron-sulfur cluster insertion protein ErpA (128 aa).

Positions 56, 120, and 122 each coordinate iron-sulfur cluster.

It belongs to the HesB/IscA family. Homodimer. Iron-sulfur cluster is required as a cofactor.

Required for insertion of 4Fe-4S clusters for at least IspG. This Xylella fastidiosa (strain M12) protein is Iron-sulfur cluster insertion protein ErpA.